Here is a 133-residue protein sequence, read N- to C-terminus: UPF0225 protein BPP1723 (133 aa).

This sequence belongs to the UPF0225 family.

The protein is UPF0225 protein BPP1723 of Bordetella parapertussis (strain 12822 / ATCC BAA-587 / NCTC 13253).